Here is a 1039-residue protein sequence, read N- to C-terminus: uncharacterized protein (1039 aa).

The span at 1–19 (MSLLMAHRKSKSSQRKLRN) shows a compositional bias: basic residues. A disordered region spans residues 1–38 (MSLLMAHRKSKSSQRKLRNRSSSLTPQKRRIRASKGSH).

This is an uncharacterized protein from Sinorhizobium fredii (strain NBRC 101917 / NGR234).